Reading from the N-terminus, the 114-residue chain is uncharacterized protein (114 aa).

In terms of biological role, possibly involved in pGI2 replication mechanism. This is an uncharacterized protein from Bacillus thuringiensis.